The following is a 932-amino-acid chain: Protein hir1 (932 aa).

WD repeat units lie at residues 16–55 (GHRL…RENE), 72–111 (THTG…PGLG), 132–171 (GHDN…RLKR), 174–213 (AHQS…IEKT), 222–265 (PLST…SEIN), 268–316 (GHEG…PLLS), and 320–361 (VFQK…DMVS). 2 stretches are compositionally biased toward polar residues: residues 405–426 (STTD…QKTP) and 441–453 (TVDT…SKEQ). Disordered regions lie at residues 405–470 (STTD…NEIP) and 498–520 (TPST…LPPQ). The span at 498-507 (TPSTSRLAST) shows a compositional bias: low complexity.

It belongs to the WD repeat HIR1 family. In terms of assembly, interacts with his3 and slm9.

It localises to the cytoplasm. Its subcellular location is the nucleus. In terms of biological role, probably required for replication-independent chromatin assembly. Required for transcriptional silencing in the outer repeat (otr) centromeric repeats and the Tf2 long terminal repeat retrotransposons. Repressor of histone gene transcription in G1 arrested cells. Required for repression of htb1 gene expression outside of S phase. This chain is Protein hir1 (hip1), found in Schizosaccharomyces pombe (strain 972 / ATCC 24843) (Fission yeast).